Consider the following 231-residue polypeptide: Large ribosomal subunit protein uL1 (231 aa).

It belongs to the universal ribosomal protein uL1 family. Part of the 50S ribosomal subunit.

Binds directly to 23S rRNA. The L1 stalk is quite mobile in the ribosome, and is involved in E site tRNA release. Its function is as follows. Protein L1 is also a translational repressor protein, it controls the translation of the L11 operon by binding to its mRNA. The chain is Large ribosomal subunit protein uL1 from Neisseria gonorrhoeae (strain ATCC 700825 / FA 1090).